Consider the following 155-residue polypeptide: Interleukin-2 (155 aa).

Positions 1–20 (MYKIQLLSCIALTLALVANG) are cleaved as a signal peptide. Threonine 23 carries O-linked (GalNAc...) threonine glycosylation. A disulfide bridge connects residues cysteine 79 and cysteine 127.

This sequence belongs to the IL-2 family.

The protein localises to the secreted. Functionally, cytokine produced by activated CD4-positive helper T-cells and to a lesser extend activated CD8-positive T-cells and natural killer (NK) cells that plays pivotal roles in the immune response and tolerance. Binds to a receptor complex composed of either the high-affinity trimeric IL-2R (IL2RA/CD25, IL2RB/CD122 and IL2RG/CD132) or the low-affinity dimeric IL-2R (IL2RB and IL2RG). Interaction with the receptor leads to oligomerization and conformation changes in the IL-2R subunits resulting in downstream signaling starting with phosphorylation of JAK1 and JAK3. In turn, JAK1 and JAK3 phosphorylate the receptor to form a docking site leading to the phosphorylation of several substrates including STAT5. This process leads to activation of several pathways including STAT, phosphoinositide-3-kinase/PI3K and mitogen-activated protein kinase/MAPK pathways. Functions as a T-cell growth factor and can increase NK-cell cytolytic activity as well. Promotes strong proliferation of activated B-cells and subsequently immunoglobulin production. Plays a pivotal role in regulating the adaptive immune system by controlling the survival and proliferation of regulatory T-cells, which are required for the maintenance of immune tolerance. Moreover, participates in the differentiation and homeostasis of effector T-cell subsets, including Th1, Th2, Th17 as well as memory CD8-positive T-cells. This is Interleukin-2 (IL2) from Bubalus bubalis (Domestic water buffalo).